A 194-amino-acid chain; its full sequence is MSKLVLASASPRRRELLARLGLPFTIQPSRIDESVYRHLPPAARVEALALAKARAVAAGLTDALVLGADTLVVCEGRVLGKPDSPAAAARMLAFLSGRTHTVYTGVAVVQAPRGPEGVTHARTAVTFRHLTPDQIEAYVATGEPLDKAGAYGIQGRGALLVAGIEGDYFNVVGLPLVQVEELLAIFGVDVWGRV.

D69 (proton acceptor) is an active-site residue.

Belongs to the Maf family. YhdE subfamily. A divalent metal cation serves as cofactor.

It is found in the cytoplasm. The enzyme catalyses dTTP + H2O = dTMP + diphosphate + H(+). It catalyses the reaction UTP + H2O = UMP + diphosphate + H(+). In terms of biological role, nucleoside triphosphate pyrophosphatase that hydrolyzes dTTP and UTP. May have a dual role in cell division arrest and in preventing the incorporation of modified nucleotides into cellular nucleic acids. The chain is dTTP/UTP pyrophosphatase from Moorella thermoacetica (strain ATCC 39073 / JCM 9320).